Reading from the N-terminus, the 638-residue chain is LIM domain kinase 2 (638 aa).

LIM zinc-binding domains follow at residues 12–63 (CPGC…CPKD) and 72–124 (CHGC…CGKC). Residues 152–239 (LISMPATTEG…TLQLLIEHDP (88 aa)) enclose the PDZ domain. At Thr-210 the chain carries Phosphothreonine. Positions 279–304 (LRRRSLRRSNSISKSPGPSSPKEPLL) are disordered. Residues 286–302 (RSNSISKSPGPSSPKEP) show a composition bias toward low complexity. Ser-293 and Ser-298 each carry phosphoserine. Positions 331-608 (LIHGEVLGKG…DSFEALSLYL (278 aa)) constitute a Protein kinase domain. ATP contacts are provided by residues 337–345 (LGKGFFGQA) and Lys-360. Asp-451 is an active-site residue. Residue Thr-505 is modified to Phosphothreonine; by ROCK1 and CDC42BP.

It belongs to the protein kinase superfamily. TKL Ser/Thr protein kinase family. Interacts with LIMK2b. In terms of assembly, interacts with LIMK2a. As to quaternary structure, binds ROCK1 and MARF1. Interacts with NISCH. Post-translationally, phosphorylated on serine and/or threonine residues by ROCK1.

The protein resides in the cytoplasm. The protein localises to the cytoskeleton. It localises to the spindle. It is found in the microtubule organizing center. Its subcellular location is the centrosome. The protein resides in the nucleus. The protein localises to the perinuclear region. It carries out the reaction L-seryl-[protein] + ATP = O-phospho-L-seryl-[protein] + ADP + H(+). The catalysed reaction is L-threonyl-[protein] + ATP = O-phospho-L-threonyl-[protein] + ADP + H(+). Its function is as follows. Serine/threonine-protein kinase that plays an essential role in the regulation of actin filament dynamics. Acts downstream of several Rho family GTPase signal transduction pathways. Involved in astral microtubule organization and mitotic spindle orientation during early stages of mitosis by mediating phosphorylation of TPPP. Displays serine/threonine-specific phosphorylation of myelin basic protein and histone (MBP) in vitro. Suppresses ciliogenesis via multiple pathways; phosphorylation of CFL1, suppression of directional trafficking of ciliary vesicles to the ciliary base, and by facilitating YAP1 nuclear localization where it acts as a transcriptional corepressor of the TEAD4 target genes AURKA and PLK1. The polypeptide is LIM domain kinase 2 (LIMK2) (Homo sapiens (Human)).